The following is a 576-amino-acid chain: Mitogen-activated protein kinase 15 (576 aa).

Residues 20 to 50 (RPSSSSSSNNHDQIQNPPTVSNPNDDEDLKK) form a disordered region. The span at 28–42 (NNHDQIQNPPTVSNP) shows a compositional bias: polar residues. The 292-residue stretch at 90–381 (YQIQEVVGKG…AEEALADPYF (292 aa)) folds into the Protein kinase domain. ATP is bound by residues 96–104 (VGKGSYGVV) and Lys119. Residue Asp216 is the Proton acceptor of the active site. Thr252 is subject to Phosphothreonine. The TXY signature appears at 252-254 (TDY). Tyr254 is modified (phosphotyrosine). Thr257 is modified (phosphothreonine). A disordered region spans residues 458–535 (EENQGPGGRS…GGGYSARNLM (78 aa)). Positions 477–501 (LPRERVPASKNETVEERSNDIERRT) are enriched in basic and acidic residues. A compositionally biased stretch (polar residues) spans 504 to 520 (AVASTLDSPKASQQAEG).

This sequence belongs to the protein kinase superfamily. CMGC Ser/Thr protein kinase family. MAP kinase subfamily. In terms of assembly, interacts with MKK7. Post-translationally, dually phosphorylated on Thr-252 and Tyr-254, which activates the enzyme.

The enzyme catalyses L-seryl-[protein] + ATP = O-phospho-L-seryl-[protein] + ADP + H(+). It catalyses the reaction L-threonyl-[protein] + ATP = O-phospho-L-threonyl-[protein] + ADP + H(+). Its activity is regulated as follows. Activated by threonine and tyrosine phosphorylation. The polypeptide is Mitogen-activated protein kinase 15 (MPK15) (Arabidopsis thaliana (Mouse-ear cress)).